The sequence spans 386 residues: Chaperone protein DnaJ (386 aa).

The 66-residue stretch at 5–70 folds into the J domain; sequence DYYEVLGVER…QKRAAYDRYG (66 aa). The CR-type zinc-finger motif lies at 138–216; the sequence is GKDETIHVPQ…CGGHGQVKEE (79 aa). Zn(2+)-binding residues include C151, C154, C168, C171, C190, C193, C204, and C207. CXXCXGXG motif repeat units lie at residues 151–158, 168–175, 190–197, and 204–211; these read CRPCEGTG, CETCGGHG, CHICQGRG, and CKTCGGHG.

The protein belongs to the DnaJ family. As to quaternary structure, homodimer. It depends on Zn(2+) as a cofactor.

Its subcellular location is the cytoplasm. Its function is as follows. Participates actively in the response to hyperosmotic and heat shock by preventing the aggregation of stress-denatured proteins and by disaggregating proteins, also in an autonomous, DnaK-independent fashion. Unfolded proteins bind initially to DnaJ; upon interaction with the DnaJ-bound protein, DnaK hydrolyzes its bound ATP, resulting in the formation of a stable complex. GrpE releases ADP from DnaK; ATP binding to DnaK triggers the release of the substrate protein, thus completing the reaction cycle. Several rounds of ATP-dependent interactions between DnaJ, DnaK and GrpE are required for fully efficient folding. Also involved, together with DnaK and GrpE, in the DNA replication of plasmids through activation of initiation proteins. The chain is Chaperone protein DnaJ from Hyphomonas neptunium (strain ATCC 15444).